We begin with the raw amino-acid sequence, 232 residues long: MTALGLVLLSMMGYSQHMQQANLGDGVATARLLSRSDWGARLPKSVEHFQGPAPYVIIHHSYMPAVCYSTPDCMKSMRDMQDFHQLERGWNDIGYSFGIGGDGMIYTGRGFNVIGAHAPKYNDKSVGIVLIGDWRTELPPKQMLDAAKNLIAFGVFKGYIDPAYKLLGHRQVRDTECPGGRLFAEISSWPHFTHINDTEGVSSTTAPVVPHVHPQAAAPQKPHQSPPAAPKV.

Positions 1–15 are cleaved as a signal peptide; sequence MTALGLVLLSMMGYS. In terms of domain architecture, N-acetylmuramoyl-L-alanine amidase spans 53 to 179; the sequence is APYVIIHHSY…RQVRDTECPG (127 aa). Residue H59 coordinates Zn(2+). A disulfide bridge connects residues C67 and C73. Residues H169 and C177 each coordinate Zn(2+). N196 carries an N-linked (GlcNAc...) asparagine glycan. A disordered region spans residues 213 to 232; sequence HPQAAAPQKPHQSPPAAPKV.

This sequence belongs to the N-acetylmuramoyl-L-alanine amidase 2 family. As to quaternary structure, monomer. The cofactor is Zn(2+). In terms of tissue distribution, widely expressed.

The protein resides in the secreted. It carries out the reaction Hydrolyzes the link between N-acetylmuramoyl residues and L-amino acid residues in certain cell-wall glycopeptides.. Its function is as follows. N-acetylmuramyl-L-alanine amidase involved in innate immunity by degrading bacterial peptidoglycans (PGN). Probably plays a scavenger role by digesting biologically active PGN into biologically inactive fragments. Has no direct bacteriolytic activity. This Drosophila melanogaster (Fruit fly) protein is Peptidoglycan-recognition protein LB (PGRP-LB).